The sequence spans 257 residues: MLILISPAKTLDYQSPLATTRYTQPELLDHSQQLIQQARQLSAPQISRLMGISDKLADLNATRFHDWQPHFTPDNARQAILAFKGDVYTGLQAETFNDADFDFAQQHLRMLSGLYGVLRPLDLMQPYRLEMGIRLENPRGKDLYQFWGDIITDKLNEALEAQGDRVVVNLASEEYFKSVKPKKLNAELIKPVFLDEKNGKFKVVSFYAKKARGLMSRFIIENRLTKPEQLTAFDREGYFFDEETSTQDELVFKRYEQ.

It belongs to the UPF0246 family.

The sequence is that of UPF0246 protein YaaA from Salmonella choleraesuis (strain SC-B67).